Here is a 477-residue protein sequence, read N- to C-terminus: Erythritol/L-threitol-binding protein (477 aa).

The tat-type signal signal peptide spans 1-38 (MMSRESQPGLHRQLSRRNMLAAMGLAGAAAVSLPVLSA).

Belongs to the bacterial solute-binding protein 1 family. Post-translationally, predicted to be exported by the Tat system. The position of the signal peptide cleavage has not been experimentally proven.

Functionally, part of an ABC transporter complex involved in erythritol/L-threitol import. Binds erythritol and L-threitol. Functions in the transport for the degradation pathways of erythritol and L-threitol, that allow M.smegmatis to grow on these compounds as the sole carbon source. The polypeptide is Erythritol/L-threitol-binding protein (Mycolicibacterium smegmatis (strain ATCC 700084 / mc(2)155) (Mycobacterium smegmatis)).